We begin with the raw amino-acid sequence, 379 residues long: Sterol 24-C-methyltransferase erg-4 (379 aa).

The protein belongs to the class I-like SAM-binding methyltransferase superfamily. Erg6/SMT family.

It catalyses the reaction lanosterol + S-adenosyl-L-methionine = eburicol + S-adenosyl-L-homocysteine + H(+). Its pathway is steroid metabolism; ergosterol biosynthesis. Functionally, catalyzes the methyl transfer from S-adenosyl-methionine to the C-24 of lanosterol to form eburicol. The protein is Sterol 24-C-methyltransferase erg-4 of Neurospora crassa (strain ATCC 24698 / 74-OR23-1A / CBS 708.71 / DSM 1257 / FGSC 987).